The following is a 991-amino-acid chain: DTSEFDPLANKEYTEEQKQTEEQEQKEFLSHTTTPALEADDGFIVTSASFAQSTPSMSALSGNISPDSQTSDPITKAVRETIIQPQKDNLIEQILKDLAALTDRDLAEQKRKEIEEEKEKDKTLSTFFGNPANREFIDKALENPELKKKLESIEIAGYKNVHNTFSAASGYPGGFKPVQWENHVSASDLRATVVKNDAGDELCTLNETTVKTKPFTLAKQDGTQVQISSYREIDFPIKLDKADGSMHLSMVALKADGTKPSKDKAVYFTAHYEEGPNGKPQLKEISSPKPLKFAGTGDDAIAYIEHGGEIYTLAVTRGKYKEMMKEVELNQGQSVDLSQAEDIIIGQGQSKEQPLITPQQTTSSSVEPPQYKQQVPPITPTNQPLQPETSQMLQSQQVNPNLLNTATALSGSMQDLLNYVNAGLTKEIDSNKQIDLIKEAATAILNNEKSDIAEKQANIIALAENTVNNKNLKPDAKVAGVNAVLETIKNDQNTPNLEKSKMLEATVAIILNSENLEPNQKQQMLEKAVDVGLSLKDDASRAVTIDGIKDVVIKTNLLSNTEKQKLLGSVLKKGVEAQVLSPAQQQLMQQHLDKITAEQIKKDTIKKVNDILFDPLSNTELKTTNIQAITSNVLDGPATAEVKGEIIQEITNTVAGSSLEAQDKAAIIKGVGETIATHSDTSLSLPNKALIMASAEKGIAESQTNLPDRELMTKGLVDGIYEGKGGPEITKAVSSGIDNSNINDSEKEALKKAKDAASEAALDRDTQNLTEGFKGQNIEEHKPHDDIYNKAREVINAVNPVIEALEKSKEPVVSAEERIVHETSSILNNISKLAVEKVNNFRAMLSPNGNLKTLAEKKEESIKKVDELVKAFGTKSSTEEQQSFIKTNLIDDKTLSKEVRLQTIDKLLQEQKRAEAIENPSVKTEDVRVVSGKSKLKPISKDNPDIEKAKMVVGRDRVNIKGNIKIMGALMNARDIIQSENLNKSTPIKRE.

3 disordered regions span residues 1-37 (DTSE…TPAL), 54-73 (TPSM…TSDP), and 348-384 (GQSK…TNQP). Basic and acidic residues predominate over residues 12-29 (EYTEEQKQTEEQEQKEFL). Positions 348–373 (GQSKEQPLITPQQTTSSSVEPPQYKQ) are enriched in polar residues.

The protein localises to the cytoplasm. This is Antigenic heat-stable 120 kDa protein (sca4) from Rickettsia sibirica.